Consider the following 293-residue polypeptide: MRGVIVPLVTPFNEDYSIDVPALEEHIDFLQKAGVHGIFINATTGEFTSLSVEERKFLAEKGRELVNTTFYLVGTASTNTFEVIELTKHAQDLGADYVVIAPPYYCPLNETALFRHYSMVAERTDIPIILYNIPSCANPLSVQLIKRLALEYSNIAGVKETIDSVNHVRDVIIEVKGEREDFMVFTGLDQHFLNTLILGGDGGIMACANFAPEVHLALYKAFQEKRFKDAFIYAQKLARLSKVYDLASSFGSAIKLAMSLRGFSIKPVLRPPYIIDGDEVKEEIRKLLREVLY.

Catalysis depends on charge relay system residues threonine 43 and tyrosine 105. The active-site Proton donor is the tyrosine 131. Catalysis depends on lysine 159, which acts as the Schiff-base intermediate with substrate.

Belongs to the DapA family. Homotetramer.

The protein localises to the cytoplasm. This is an uncharacterized protein from Thermococcus onnurineus (strain NA1).